Consider the following 273-residue polypeptide: NADPH-dependent 7-cyano-7-deazaguanine reductase (273 aa).

A substrate-binding site is contributed by 80 to 82; it reads VES. An NADPH-binding site is contributed by 82 to 83; that stretch reads SK. Catalysis depends on C180, which acts as the Thioimide intermediate. D187 serves as the catalytic Proton donor. Residue 219–220 participates in substrate binding; the sequence is HE. 248–249 is a binding site for NADPH; the sequence is RG.

This sequence belongs to the GTP cyclohydrolase I family. QueF type 2 subfamily. As to quaternary structure, homodimer.

It localises to the cytoplasm. It carries out the reaction 7-aminomethyl-7-carbaguanine + 2 NADP(+) = 7-cyano-7-deazaguanine + 2 NADPH + 3 H(+). It functions in the pathway tRNA modification; tRNA-queuosine biosynthesis. Catalyzes the NADPH-dependent reduction of 7-cyano-7-deazaguanine (preQ0) to 7-aminomethyl-7-deazaguanine (preQ1). The sequence is that of NADPH-dependent 7-cyano-7-deazaguanine reductase from Bordetella parapertussis (strain 12822 / ATCC BAA-587 / NCTC 13253).